Reading from the N-terminus, the 253-residue chain is 20 kDa chaperonin, chloroplastic (253 aa).

The transit peptide at 1–50 directs the protein to the chloroplast; that stretch reads MAATQLTASPVTMSARSLASLDGLRASSVKFSSLKPGTLRQSQFRRLVVK. 2 cpn-10 domain regions span residues 60–153 and 159–252; these read TSIK…GILE and DLKP…MAIL. T212 bears the Phosphothreonine mark.

The protein belongs to the GroES chaperonin family. As to quaternary structure, homotetramer. Forms stable complexes with CPN60 in the presence of ATP. Interacts with FSD1. Interacts with CLPT1 and CLPT2. Interacts with CHLH. Interacts with SPY. In terms of tissue distribution, ubiquitous. Most abundant in leaves and inflorescence. Low levels found in roots.

Its subcellular location is the plastid. It is found in the chloroplast. Seems to function only as a co-chaperone, along with CPN60, and in certain cases is essential for the discharge of biologically active proteins from CPN60. Required to activate the iron superoxide dismutases (FeSOD). Functionally, involved in abscisic acid (ABA) signaling, independently of its co-chaperone role. Acts as a negative regulator of the CHLH-WRKY40 coupled ABA signaling pathway, downstream of CHLH and upstream of WRKY40. This chain is 20 kDa chaperonin, chloroplastic (CPN20), found in Arabidopsis thaliana (Mouse-ear cress).